A 59-amino-acid polypeptide reads, in one-letter code: Large ribosomal subunit protein bL33 (59 aa).

Positions 26-59 are disordered; sequence RYTTTKNKKNNTERLVLKKYNPNLKKHTEHKEIK.

Belongs to the bacterial ribosomal protein bL33 family.

The chain is Large ribosomal subunit protein bL33 from Chlorobium phaeobacteroides (strain BS1).